Reading from the N-terminus, the 690-residue chain is Calpain-9 (690 aa).

A disordered region spans residues 1–23 (MPYLHRSLRPQPQPVPGDARTIH). In terms of domain architecture, Calpain catalytic spans 42-337 (LFEDADFPAS…FDKVEICNLT (296 aa)). Residues leucine 81, glycine 83, and aspartate 88 each coordinate Ca(2+). Cysteine 97 is a catalytic residue. Glutamate 167 serves as a coordination point for Ca(2+). Catalysis depends on residues histidine 254 and asparagine 278. Ca(2+) contacts are provided by glutamate 284, aspartate 291, leucine 312, aspartate 314, and glutamate 316. Residues 338–521 (PDALEDSALH…PQEEETEEEQ (184 aa)) are domain III. 3 consecutive EF-hand domains span residues 518-552 (EEEQQFRALFQRVAGEDMEVSAEELEYVLNAVLQK), 561-589 (LSLLSCRNIISLMDTSGNGKLEFEEFRVF), and 591-626 (DKLKHWMDLFLQFDVDKSGTMSSYELRTALKAAGFQ). Residues 522-690 (QFRALFQRVA…NEFISLTMNI (169 aa)) are domain IV. The Ca(2+) site is built by aspartate 574, serine 576, asparagine 578, lysine 580, glutamate 585, aspartate 604, aspartate 606, serine 608, threonine 610, and glutamate 615.

It belongs to the peptidase C2 family. As to expression, predominantly expressed in stomach and small intestine, although low levels of expression in other organs.

It is found in the cytoplasm. Functionally, calcium-regulated non-lysosomal thiol-protease. The sequence is that of Calpain-9 (Capn9) from Mus musculus (Mouse).